Consider the following 919-residue polypeptide: Alpha-amylase (919 aa).

A signal peptide spans 1 to 33 (MPATRRTARVRRVAAVTVTALAAALLPPLAARA). Residues Asn-182 and Asp-281 each contribute to the Ca(2+) site. Asp-312 acts as the Nucleophile in catalysis. His-316 contacts Ca(2+). Glu-346 (proton donor) is an active-site residue. Residues 704-729 (ASGRLHHRHPARRGGAHRRLPGPRGR) are disordered. Residues 707–724 (RLHHRHPARRGGAHRRLP) are compositionally biased toward basic residues.

The protein belongs to the glycosyl hydrolase 13 family. As to quaternary structure, monomer. Ca(2+) is required as a cofactor.

It is found in the secreted. It catalyses the reaction Endohydrolysis of (1-&gt;4)-alpha-D-glucosidic linkages in polysaccharides containing three or more (1-&gt;4)-alpha-linked D-glucose units.. The chain is Alpha-amylase (amy) from Streptomyces lividans.